A 93-amino-acid polypeptide reads, in one-letter code: MFNVNEYFEGNVKSIAFDTAVGNSTLGVMAPGEYEFATSQHETMSVVSGAMTVLLPGESEWKTLTAGQVFTVDANVKFKAQVSVNTAYLCDYV.

The protein belongs to the nucleoside phosphorylase PpnP family.

It catalyses the reaction a purine D-ribonucleoside + phosphate = a purine nucleobase + alpha-D-ribose 1-phosphate. The catalysed reaction is adenosine + phosphate = alpha-D-ribose 1-phosphate + adenine. The enzyme catalyses cytidine + phosphate = cytosine + alpha-D-ribose 1-phosphate. It carries out the reaction guanosine + phosphate = alpha-D-ribose 1-phosphate + guanine. It catalyses the reaction inosine + phosphate = alpha-D-ribose 1-phosphate + hypoxanthine. The catalysed reaction is thymidine + phosphate = 2-deoxy-alpha-D-ribose 1-phosphate + thymine. The enzyme catalyses uridine + phosphate = alpha-D-ribose 1-phosphate + uracil. It carries out the reaction xanthosine + phosphate = alpha-D-ribose 1-phosphate + xanthine. Functionally, catalyzes the phosphorolysis of diverse nucleosides, yielding D-ribose 1-phosphate and the respective free bases. Can use uridine, adenosine, guanosine, cytidine, thymidine, inosine and xanthosine as substrates. Also catalyzes the reverse reactions. The chain is Pyrimidine/purine nucleoside phosphorylase from Pseudoalteromonas atlantica (strain T6c / ATCC BAA-1087).